Reading from the N-terminus, the 201-residue chain is Small ribosomal subunit protein uS4 (201 aa).

The tract at residues 28–47 (KKNYPPGQHGNSRKRKTSEY) is disordered. The region spanning 92–155 (GRLDNIVFRL…KSLEVIANSL (64 aa)) is the S4 RNA-binding domain.

This sequence belongs to the universal ribosomal protein uS4 family. As to quaternary structure, part of the 30S ribosomal subunit. Contacts protein S5. The interaction surface between S4 and S5 is involved in control of translational fidelity.

Its function is as follows. One of the primary rRNA binding proteins, it binds directly to 16S rRNA where it nucleates assembly of the body of the 30S subunit. With S5 and S12 plays an important role in translational accuracy. The protein is Small ribosomal subunit protein uS4 of Bacteroides fragilis (strain YCH46).